Here is a 449-residue protein sequence, read N- to C-terminus: GTPase Der (449 aa).

EngA-type G domains follow at residues 4-169 (PIVA…PAGE) and 177-353 (IQVA…EQHR). Residues 10-17 (GRPNVGKS), 57-61 (DTGGL), 120-123 (NKCE), 183-190 (GRPNVGKS), 230-234 (DTAGI), and 295-298 (NKWD) contribute to the GTP site. The KH-like domain maps to 354 to 439 (RRVTTAVVND…PIRLLWRSKK (86 aa)).

The protein belongs to the TRAFAC class TrmE-Era-EngA-EngB-Septin-like GTPase superfamily. EngA (Der) GTPase family. As to quaternary structure, associates with the 50S ribosomal subunit.

GTPase that plays an essential role in the late steps of ribosome biogenesis. The chain is GTPase Der from Thermosynechococcus vestitus (strain NIES-2133 / IAM M-273 / BP-1).